A 354-amino-acid polypeptide reads, in one-letter code: tRNA dimethylallyltransferase (354 aa).

Residue Gly28–Ser35 coordinates ATP. Thr30 to Ser35 contributes to the substrate binding site. The segment at Asp53–Gln56 is interaction with substrate tRNA.

This sequence belongs to the IPP transferase family. As to quaternary structure, monomer. It depends on Mg(2+) as a cofactor.

It catalyses the reaction adenosine(37) in tRNA + dimethylallyl diphosphate = N(6)-dimethylallyladenosine(37) in tRNA + diphosphate. Its function is as follows. Catalyzes the transfer of a dimethylallyl group onto the adenine at position 37 in tRNAs that read codons beginning with uridine, leading to the formation of N6-(dimethylallyl)adenosine (i(6)A). The sequence is that of tRNA dimethylallyltransferase from Synechococcus sp. (strain JA-2-3B'a(2-13)) (Cyanobacteria bacterium Yellowstone B-Prime).